The sequence spans 193 residues: Holliday junction branch migration complex subunit RuvA (193 aa).

A domain I region spans residues Met1–Leu64. Positions Thr65–Leu139 are domain II. A flexible linker region spans residues Leu139–Ala143. The domain III stretch occupies residues Ser144–Ala193.

Belongs to the RuvA family. In terms of assembly, homotetramer. Forms an RuvA(8)-RuvB(12)-Holliday junction (HJ) complex. HJ DNA is sandwiched between 2 RuvA tetramers; dsDNA enters through RuvA and exits via RuvB. An RuvB hexamer assembles on each DNA strand where it exits the tetramer. Each RuvB hexamer is contacted by two RuvA subunits (via domain III) on 2 adjacent RuvB subunits; this complex drives branch migration. In the full resolvosome a probable DNA-RuvA(4)-RuvB(12)-RuvC(2) complex forms which resolves the HJ.

It localises to the cytoplasm. The RuvA-RuvB-RuvC complex processes Holliday junction (HJ) DNA during genetic recombination and DNA repair, while the RuvA-RuvB complex plays an important role in the rescue of blocked DNA replication forks via replication fork reversal (RFR). RuvA specifically binds to HJ cruciform DNA, conferring on it an open structure. The RuvB hexamer acts as an ATP-dependent pump, pulling dsDNA into and through the RuvAB complex. HJ branch migration allows RuvC to scan DNA until it finds its consensus sequence, where it cleaves and resolves the cruciform DNA. This Burkholderia vietnamiensis (strain G4 / LMG 22486) (Burkholderia cepacia (strain R1808)) protein is Holliday junction branch migration complex subunit RuvA.